Here is a 787-residue protein sequence, read N- to C-terminus: MSRFVDKLPLFDRRPSPMEEAEGLPRSGYLGQLHHHQYYQPHSNMLPLEQSPPTSTKHTSVTLAQLLKRVNDARSGSSTPISSPRYTIELGGSKPESVSSESDDHHSDDGGSEGQPRALVLKFTDLTYSVKQRRKGSCLPFRRAAADEPELPAMRTLLDGISGEARDGEIMAVLGASGSGKSTLIDALANRIAKESLHGSVTINGESIDSNLLKVISAYVRQEDLLYPMLTVEETLMFAAEFRLPRSLPTREKKKRVKELIDQLGLKRAANTIIGDEGHRGVSGGERRRVSIGVDIIHNPIMLFLDEPTSGLDSTSAFMVVTVLKAIAQSGSVVVMSIHQPSYRILGLLDRLLFLSRGKTVYYGPPSELPPFFLDFGKPIPDNENPTEFALDLIKEMETETEGTKRLAEHNAAWQLKHHGEGRGYGGKPGMSLKEAISASISRGKLVSGATDGTVSVAASDHSAPPPSSSSVSKFVNPFWIEMGVLTRRAFINTKRTPEVFIIRLAAVLVTGFILATIFWRLDESPKGVQERLGFFAIAMSTMYYTCSDALPVFLSERYIFLRETAYNAYRRSSYVLSHTIVGFPSLVVLSFAFALTTFFSVGLAGGVNGFFYFVAIVLASFWAGSGFATFLSGVVTHVMLGFPVVLSTLAYFLLFSGFFINRDRIPRYWLWFHYISLVKYPYEAVMQNEFGDPTRCFVRGVQMFDNTPLAALPAAVKVRVLQSMSASLGVNIGTGTCITTGPDFLKQQAITDFGKWECLWITVAWGFLFRILFYISLLLGSRNKRR.

Basic and acidic residues predominate over residues 1–17; that stretch reads MSRFVDKLPLFDRRPSP. Disordered regions lie at residues 1 to 25 and 71 to 116; these read MSRFVDKLPLFDRRPSPMEEAEGLP and NDAR…EGQP. Positions 74-85 are enriched in polar residues; sequence RSGSSTPISSPR. Positions 121–382 constitute an ABC transporter domain; it reads LKFTDLTYSV…FLDFGKPIPD (262 aa). 175-182 is an ATP binding site; sequence GASGSGKS. Positions 484 to 691 constitute an ABC transmembrane type-2 domain; sequence GVLTRRAFIN…PYEAVMQNEF (208 aa). 8 helical membrane-spanning segments follow: residues 500 to 520, 535 to 555, 576 to 596, 599 to 619, 620 to 640, 641 to 661, 728 to 745, and 760 to 780; these read VFIIRLAAVLVTGFILATIFW, FFAIAMSTMYYTCSDALPVFL, VLSHTIVGFPSLVVLSFAFAL, FFSVGLAGGVNGFFYFVAIVL, ASFWAGSGFATFLSGVVTHVM, LGFPVVLSTLAYFLLFSGFFI, SLGVNIGTGTCITTGPDF, and LWITVAWGFLFRILFYISLLL.

This sequence belongs to the ABC transporter superfamily. ABCG family. Eye pigment precursor importer (TC 3.A.1.204) subfamily. Expressed in the crown root primordia, endodermis, pericycle and stele in the root, in leaf primordia of main and axillary shoots, and in the vascular cells and leaf epidermis of older leaves.

Its subcellular location is the cell membrane. Its function is as follows. Essential transporter for growth and development under abiotic stress. Mediates shoot branching by promoting the outgrowth of lateral shoots. Required for salt tolerance via Na/K homeostasis, at least partly by regulating SKC1/OsHKT1;5. Necessary for hypodermal suberization of roots, which contributes to formation of the apoplastic barrier. The chain is ABC transporter G family member 5 from Oryza sativa subsp. japonica (Rice).